Reading from the N-terminus, the 126-residue chain is Fluoride-specific ion channel FluC (126 aa).

4 helical membrane-spanning segments follow: residues 5 to 25, 35 to 55, 68 to 88, and 99 to 119; these read LHFLAVGVGAAAGAWLRWLLG, WGTLAANLGGGYLIGLILGLI, ALVTGFLGGLTTFSTFSAEVV, and AAGYAVVSLAGSLCLTALGLA. The Na(+) site is built by Gly75 and Thr78.

This sequence belongs to the fluoride channel Fluc/FEX (TC 1.A.43) family.

The protein localises to the cell inner membrane. The enzyme catalyses fluoride(in) = fluoride(out). Its activity is regulated as follows. Na(+) is not transported, but it plays an essential structural role and its presence is essential for fluoride channel function. Functionally, fluoride-specific ion channel. Important for reducing fluoride concentration in the cell, thus reducing its toxicity. The protein is Fluoride-specific ion channel FluC of Bordetella avium (strain 197N).